We begin with the raw amino-acid sequence, 710 residues long: Bifunctional lysine-specific demethylase and histidyl-hydroxylase NO66 (710 aa).

The segment at 103–137 (TDEMNKTKKKQKKIMKKEIRKRTKRKRKSVNKREL) is disordered. Positions 109–132 (TKKKQKKIMKKEIRKRTKRKRKSV) are enriched in basic residues. Residues 359–506 (CSIQLTNPQS…DLLERVIPPA (148 aa)) form the JmjC domain. Fe cation contacts are provided by H405, D407, and H472.

It belongs to the ROX family. NO66 subfamily. It depends on Fe(2+) as a cofactor.

It localises to the nucleus. The enzyme catalyses N(6),N(6)-dimethyl-L-lysyl(36)-[histone H3] + 2 2-oxoglutarate + 2 O2 = L-lysyl(36)-[histone H3] + 2 formaldehyde + 2 succinate + 2 CO2. Its function is as follows. Oxygenase that can act as both a histone lysine demethylase and a ribosomal histidine hydroxylase. Specifically demethylates 'Lys-4' (H3K4me) and 'Lys-36' (H3K36me) of histone H3, thereby playing a central role in histone code. This is Bifunctional lysine-specific demethylase and histidyl-hydroxylase NO66 from Brugia malayi (Filarial nematode worm).